Here is a 287-residue protein sequence, read N- to C-terminus: UPF0276 protein ACIAD0933 (287 aa).

The protein belongs to the UPF0276 family.

The polypeptide is UPF0276 protein ACIAD0933 (Acinetobacter baylyi (strain ATCC 33305 / BD413 / ADP1)).